The chain runs to 267 residues: uncharacterized protein (267 aa).

Residues serine 210 and serine 224 each carry the phosphoserine modification.

As to expression, testis. Down-regulated in men with spermatocyte arrest.

Functionally, essential for normal spermatogenesis and male fertility. This is an uncharacterized protein from Homo sapiens (Human).